A 415-amino-acid polypeptide reads, in one-letter code: Putative transcription factor BOFH (415 aa).

Positions 159–221 (SQEPVQHQDQ…NEGEDDDGMD (63 aa)) are disordered. Gly residues predominate over residues 174–183 (INGGGRGGYW). Basic residues predominate over residues 193-202 (QQQRRRKKRL). The span at 206 to 220 (ETDDDGNEGEDDDGM) shows a compositional bias: acidic residues. 3 DNA-binding regions span residues 234–238 (REHPF), 303–310 (NKPKMRHY), and 374–377 (YVPT).

The protein belongs to the FLO/LFY family. In terms of tissue distribution, acts in the floral primordia.

It localises to the nucleus. Functionally, controls floral meristem identity. Is required very early in flower development and may act here as a transcription factor. In Brassica oleracea var. botrytis (Cauliflower), this protein is Putative transcription factor BOFH.